Reading from the N-terminus, the 1099-residue chain is Protein transport protein Sec24A (1099 aa).

3 disordered regions span residues Met-1–Gln-36, Lys-65–Ala-139, and Ser-279–Pro-317. Composition is skewed to polar residues over residues Gly-10–Asn-20, Asn-68–Gly-90, Ser-108–Ala-126, Ser-279–Val-292, and Tyr-303–Pro-317. Cys-437, Cys-440, Cys-458, and Cys-461 together coordinate Zn(2+). Positions Cys-437–Cys-461 are zinc finger-like. Residues Pro-972–Phe-1044 form a Gelsolin-like repeat.

This sequence belongs to the SEC23/SEC24 family. SEC24 subfamily. COPII is composed of at least five proteins: the Sec23/24 complex, the Sec13/31 complex and Sar1. Interacts with TMED2. Interacts (as part of the Sec23/24 complex) with SEC22B; recruits SEC22B into COPII-coated vesicles for its transport from the endoplasmic reticulum to the Golgi. Interacts with STING1; promoting STING1 translocation to COPII vesicles in a STEEP1-dependent manner. Interacts with TMEM39A. Interacts with SACM1L; this interaction is reduced in the absence of TMEM39A. Interacts with kinase FAM20C; transport of FAM20C from the endoplasmic reticulum to the Golgi is likely to be mediated by COPII vesicles.

It localises to the cytoplasmic vesicle. The protein localises to the COPII-coated vesicle membrane. It is found in the endoplasmic reticulum membrane. The protein resides in the cytoplasm. Its subcellular location is the cytosol. Component of the coat protein complex II (COPII) which promotes the formation of transport vesicles from the endoplasmic reticulum (ER). The coat has two main functions, the physical deformation of the endoplasmic reticulum membrane into vesicles and the selection of cargo molecules for their transport to the Golgi complex. Plays a central role in cargo selection within the COPII complex and together with SEC24B may have a different specificity compared to SEC24C and SEC24D. May package preferentially cargos with cytoplasmic DxE or LxxLE motifs and may also recognize conformational epitopes. This Bos taurus (Bovine) protein is Protein transport protein Sec24A.